A 154-amino-acid polypeptide reads, in one-letter code: Small ribosomal subunit protein uS13 (154 aa).

It belongs to the universal ribosomal protein uS13 family.

It localises to the cytoplasm. Functionally, located at the top of the head of the 40S subunit, it contacts several helices of the 18S rRNA. The polypeptide is Small ribosomal subunit protein uS13 (rps18) (Dictyostelium discoideum (Social amoeba)).